Here is a 120-residue protein sequence, read N- to C-terminus: Small ribosomal subunit protein uS13 (120 aa).

Positions 92–120 (HRKGLPVRGQTTKNNARTRKGKKKTVGSK) are disordered. The segment covering 107-120 (ARTRKGKKKTVGSK) has biased composition (basic residues).

Belongs to the universal ribosomal protein uS13 family. In terms of assembly, part of the 30S ribosomal subunit. Forms a loose heterodimer with protein S19. Forms two bridges to the 50S subunit in the 70S ribosome.

In terms of biological role, located at the top of the head of the 30S subunit, it contacts several helices of the 16S rRNA. In the 70S ribosome it contacts the 23S rRNA (bridge B1a) and protein L5 of the 50S subunit (bridge B1b), connecting the 2 subunits; these bridges are implicated in subunit movement. Contacts the tRNAs in the A and P-sites. The chain is Small ribosomal subunit protein uS13 from Helicobacter hepaticus (strain ATCC 51449 / 3B1).